The sequence spans 335 residues: Adenosine deaminase (335 aa).

Residues His12 and His14 each coordinate Zn(2+). Positions 14 and 16 each coordinate substrate. His197 provides a ligand contact to Zn(2+). Catalysis depends on Glu200, which acts as the Proton donor. Asp278 contacts Zn(2+).

It belongs to the metallo-dependent hydrolases superfamily. Adenosine and AMP deaminases family. Adenosine deaminase subfamily. It depends on Zn(2+) as a cofactor.

It catalyses the reaction adenosine + H2O + H(+) = inosine + NH4(+). The enzyme catalyses 2'-deoxyadenosine + H2O + H(+) = 2'-deoxyinosine + NH4(+). Catalyzes the hydrolytic deamination of adenosine and 2-deoxyadenosine. In Clostridium botulinum (strain Langeland / NCTC 10281 / Type F), this protein is Adenosine deaminase.